Reading from the N-terminus, the 214-residue chain is Rac-like GTP-binding protein 1 (214 aa).

Residues 17 to 24 (GDGAVGKT), 20 to 25 (AVGKTC), threonine 42, 64 to 68 (DTAGQ), glycine 67, 122 to 125 (TKLD), 123 to 125 (KLD), and 164 to 165 (SK) contribute to the GTP site. The Effector region motif lies at 39–47 (YIPTVFDNF).

Belongs to the small GTPase superfamily. Rho family. May interact with MPK1/MAPK6. Binds to RBOHB, preferentially in the GTP-bound form. Interacts with CCR1 in a GTP-dependent manner. Post-translationally, may be palmitoylated.

The protein localises to the cytoplasm. It localises to the membrane. Functionally, small GTPase playing a general role in disease resistance signaling pathway. Acts downstream of heterotrimeric G protein alpha subunit. Regulates cell death and reactive oxygen species production, probably through NADPH oxidase. Also involved in sphingolipid elicitor (SE)-dependent defense signaling. Activates phytoalexin production and alters defense-related genes. Down-regulates metallothionein 2b, a reactive oxygen scavenger. May control lignin synthesis through regulation of both NADPH oxidase and CCR1 activities during defense responses. Stimulates lignin synthesis in suspension cell culture. This Oryza sativa subsp. japonica (Rice) protein is Rac-like GTP-binding protein 1 (RAC1).